A 172-amino-acid polypeptide reads, in one-letter code: Adenine phosphoribosyltransferase (172 aa).

It belongs to the purine/pyrimidine phosphoribosyltransferase family. In terms of assembly, homodimer.

It localises to the cytoplasm. It catalyses the reaction AMP + diphosphate = 5-phospho-alpha-D-ribose 1-diphosphate + adenine. It participates in purine metabolism; AMP biosynthesis via salvage pathway; AMP from adenine: step 1/1. Catalyzes a salvage reaction resulting in the formation of AMP, that is energically less costly than de novo synthesis. This is Adenine phosphoribosyltransferase from Pelobacter propionicus (strain DSM 2379 / NBRC 103807 / OttBd1).